Consider the following 114-residue polypeptide: UPF0212 protein UNCMA_00570 (114 aa).

It belongs to the UPF0212 family.

The chain is UPF0212 protein UNCMA_00570 from Methanocella arvoryzae (strain DSM 22066 / NBRC 105507 / MRE50).